A 159-amino-acid chain; its full sequence is Succinate dehydrogenase [ubiquinone] cytochrome b small subunit, mitochondrial (159 aa).

The transit peptide at 1 to 56 directs the protein to the mitochondrion; sequence MAVLLKLGVLCSGQGARALSLRSRAVRPAFVSAFLQDQPTPGWRGTQHIHLSPSHQ. Over 57 to 63 the chain is Mitochondrial matrix; it reads SGSKAAS. The helical transmembrane segment at 64 to 85 threads the bilayer; it reads LHWTSERVVSVLLLGLIPAGYL. The Mitochondrial intermembrane portion of the chain corresponds to 86–90; that stretch reads NPCSV. Residues 91–111 traverse the membrane as a helical segment; sequence VDYSLAAALTLHSHWGIGQVV. Histidine 102 is a heme b binding site. Over 112–120 the chain is Mitochondrial matrix; it reads TDYVHGDAL. Tyrosine 114 is a binding site for a ubiquinone. The chain crosses the membrane as a helical span at residues 121 to 142; it reads QKATKAGLLAVSALTFAGLCYF. The Mitochondrial intermembrane segment spans residues 143–159; that stretch reads NYHDVGICRAVAMLWKL.

The protein belongs to the CybS family. As to quaternary structure, component of complex II composed of four subunits: the flavoprotein (FP) SDHA, iron-sulfur protein (IP) SDHB, and a cytochrome b560 composed of SDHC and SDHD.

It localises to the mitochondrion inner membrane. Its pathway is carbohydrate metabolism; tricarboxylic acid cycle. Its function is as follows. Membrane-anchoring subunit of succinate dehydrogenase (SDH) that is involved in complex II of the mitochondrial electron transport chain and is responsible for transferring electrons from succinate to ubiquinone (coenzyme Q). SDH also oxidizes malate to the non-canonical enol form of oxaloacetate, enol-oxaloacetate. Enol-oxaloacetate, which is a potent inhibitor of the succinate dehydrogenase activity, is further isomerized into keto-oxaloacetate. The protein is Succinate dehydrogenase [ubiquinone] cytochrome b small subunit, mitochondrial (Sdhd) of Rattus norvegicus (Rat).